The sequence spans 241 residues: Probable cobalt-factor III C(17)-methyltransferase (241 aa).

It belongs to the precorrin methyltransferase family.

It carries out the reaction Co(II)-factor III + S-adenosyl-L-methionine + H(+) = Co(II)-factor IV + S-adenosyl-L-homocysteine. It functions in the pathway cofactor biosynthesis; adenosylcobalamin biosynthesis; cob(II)yrinate a,c-diamide from sirohydrochlorin (anaerobic route): step 3/10. Functionally, methyltransferase that likely catalyzes the ring contraction and methylation of C-17 in cobalt-factor III to form cobalt-factor IV. May also convert cobalt-precorrin-3 to cobalt-precorrin-4. This Salmonella typhimurium (strain LT2 / SGSC1412 / ATCC 700720) protein is Probable cobalt-factor III C(17)-methyltransferase (cbiH).